The chain runs to 178 residues: Ribosome maturation factor RimM (178 aa).

One can recognise a PRC barrel domain in the interval 101–178; it reads TDEYYWYQLV…VMRVEWDADF (78 aa).

The protein belongs to the RimM family. As to quaternary structure, binds ribosomal protein uS19.

It is found in the cytoplasm. Its function is as follows. An accessory protein needed during the final step in the assembly of 30S ribosomal subunit, possibly for assembly of the head region. Essential for efficient processing of 16S rRNA. May be needed both before and after RbfA during the maturation of 16S rRNA. It has affinity for free ribosomal 30S subunits but not for 70S ribosomes. The protein is Ribosome maturation factor RimM of Pseudomonas entomophila (strain L48).